A 223-amino-acid polypeptide reads, in one-letter code: Cytotoxic T-lymphocyte protein 4 (223 aa).

The first 35 residues, 1–35 (MACSGFQSHGAWLELTSRTWPCTALFSLLFIPVFS), serve as a signal peptide directing secretion. Residues 38 to 161 (MHVAQPAVVL…IDPEPCPDSD (124 aa)) lie on the Extracellular side of the membrane. The Ig-like V-type domain occupies 39 to 140 (HVAQPAVVLA…VELLYPPPYY (102 aa)). The tract at residues 46-50 (VLANS) is homodimerization. 2 cysteine pairs are disulfide-bonded: Cys-58-Cys-129 and Cys-85-Cys-103. Asn-113 is a glycosylation site (N-linked (GlcNAc...) asparagine). An important for interaction with CD80 and CD86 region spans residues 134–139 (LYPPPY). N-linked (GlcNAc...) asparagine glycosylation is present at Asn-145. The interval 150–155 (YVIDPE) is homodimerization. The chain crosses the membrane as a helical span at residues 162 to 182 (FLLWILAAVSSGLFFYSFLIT). Over 183–223 (AVSLSKMLKKRSPLTTGVYVKMPPTEPECEKQFQPYFIPIN) the chain is Cytoplasmic. A Phosphotyrosine; by TXK and JAK2 modification is found at Tyr-201.

As to quaternary structure, homodimer; disulfide-linked. Binds to CD80/B7-1 and CD86/B7.2. Interacts with ICOSLG. N-glycosylation is important for dimerization. Post-translationally, phosphorylation at Tyr-201 prevents binding to the AP-2 adapter complex, blocks endocytosis, and leads to retention of CTLA4 on the cell surface.

The protein resides in the cell membrane. Functionally, inhibitory receptor acting as a major negative regulator of T-cell responses. The affinity of CTLA4 for its natural B7 family ligands, CD80 and CD86, is considerably stronger than the affinity of their cognate stimulatory coreceptor CD28. This chain is Cytotoxic T-lymphocyte protein 4 (CTLA4), found in Sus scrofa (Pig).